The sequence spans 295 residues: Ribosomal RNA small subunit methyltransferase A (295 aa).

The S-adenosyl-L-methionine site is built by asparagine 28, leucine 30, glycine 55, glutamate 76, aspartate 101, and asparagine 131.

This sequence belongs to the class I-like SAM-binding methyltransferase superfamily. rRNA adenine N(6)-methyltransferase family. RsmA subfamily.

The protein resides in the cytoplasm. The enzyme catalyses adenosine(1518)/adenosine(1519) in 16S rRNA + 4 S-adenosyl-L-methionine = N(6)-dimethyladenosine(1518)/N(6)-dimethyladenosine(1519) in 16S rRNA + 4 S-adenosyl-L-homocysteine + 4 H(+). Its function is as follows. Specifically dimethylates two adjacent adenosines (A1518 and A1519) in the loop of a conserved hairpin near the 3'-end of 16S rRNA in the 30S particle. May play a critical role in biogenesis of 30S subunits. This is Ribosomal RNA small subunit methyltransferase A from Pelotomaculum thermopropionicum (strain DSM 13744 / JCM 10971 / SI).